Reading from the N-terminus, the 393-residue chain is Phospho-N-acetylmuramoyl-pentapeptide-transferase (393 aa).

The next 10 membrane-spanning stretches (helical) occupy residues 29–49, 75–95, 101–121, 138–158, 193–213, 226–246, 263–283, 290–310, 315–335, and 370–390; these read RAVMAAMTALLIGLALGPIVI, TPTMGGALILLAIAISTLLWF, FVWIVMIVTFGFGAIGWVDDW, YFWQSLIGLVAALYLAFSVSE, SISYPLGVFGFIFLTYVVIVG, GLAIMPVVMVGSALGIFAYAT, AGELMIFCAAMAGAGLAFLWF, VFMGDVGALALGGALGTIAVI, VVLAIMGGIFVLEALSVMAQV, and QVVVRFWIITMLLCLVGLSSL.

The protein belongs to the glycosyltransferase 4 family. MraY subfamily. Requires Mg(2+) as cofactor.

It is found in the cell inner membrane. It catalyses the reaction UDP-N-acetyl-alpha-D-muramoyl-L-alanyl-gamma-D-glutamyl-meso-2,6-diaminopimeloyl-D-alanyl-D-alanine + di-trans,octa-cis-undecaprenyl phosphate = di-trans,octa-cis-undecaprenyl diphospho-N-acetyl-alpha-D-muramoyl-L-alanyl-D-glutamyl-meso-2,6-diaminopimeloyl-D-alanyl-D-alanine + UMP. It participates in cell wall biogenesis; peptidoglycan biosynthesis. Catalyzes the initial step of the lipid cycle reactions in the biosynthesis of the cell wall peptidoglycan: transfers peptidoglycan precursor phospho-MurNAc-pentapeptide from UDP-MurNAc-pentapeptide onto the lipid carrier undecaprenyl phosphate, yielding undecaprenyl-pyrophosphoryl-MurNAc-pentapeptide, known as lipid I. The chain is Phospho-N-acetylmuramoyl-pentapeptide-transferase from Methylibium petroleiphilum (strain ATCC BAA-1232 / LMG 22953 / PM1).